We begin with the raw amino-acid sequence, 292 residues long: 33 kDa chaperonin (292 aa).

Cystine bridges form between Cys-230-Cys-232 and Cys-263-Cys-266.

Belongs to the HSP33 family. Under oxidizing conditions two disulfide bonds are formed involving the reactive cysteines. Under reducing conditions zinc is bound to the reactive cysteines and the protein is inactive.

Its subcellular location is the cytoplasm. Functionally, redox regulated molecular chaperone. Protects both thermally unfolding and oxidatively damaged proteins from irreversible aggregation. Plays an important role in the bacterial defense system toward oxidative stress. This chain is 33 kDa chaperonin, found in Salmonella choleraesuis (strain SC-B67).